The primary structure comprises 362 residues: E3 ubiquitin-protein ligase TM129 (362 aa).

Topologically, residues 1 to 6 are lumenal; sequence MDSPEV. Residues 7 to 27 traverse the membrane as a helical segment; sequence TFTLAYLVFAVCFVFTPNEFY. Residues 28–56 lie on the Cytoplasmic side of the membrane; that stretch reads SAGLTVQNLLSGWLGSEDAAFVPYHLRRT. The chain crosses the membrane as a helical span at residues 57–77; the sequence is SATLLCHSLLPLGYYMGMCFA. The Lumenal portion of the chain corresponds to 78–94; it reads ASEKQLYSPGQAPEAWQ. Residues 95-115 traverse the membrane as a helical segment; the sequence is LFLLLAVTLPLLSCTLIYYWS. The Cytoplasmic portion of the chain corresponds to 116-362; that stretch reads WDRWTRHPLA…FCILDVCCVR (247 aa). The segment at 285–350 adopts an RING-type; degenerate zinc-finger fold; that stretch reads CIGCMQTRAS…ASRVPCPTCR (66 aa).

This sequence belongs to the TMEM129 family. Integral component of ER-resident dislocation complexes.

Its subcellular location is the endoplasmic reticulum membrane. It carries out the reaction S-ubiquitinyl-[E2 ubiquitin-conjugating enzyme]-L-cysteine + [acceptor protein]-L-lysine = [E2 ubiquitin-conjugating enzyme]-L-cysteine + N(6)-ubiquitinyl-[acceptor protein]-L-lysine.. The protein operates within protein modification; protein ubiquitination. In terms of biological role, E3 ubiquitin-protein ligase involved in ER-associated protein degradation, preferentially associates with the E2 enzyme UBE2J2. Exploited by viral US11 proteins to mediate HLA class I proteins degradation. The polypeptide is E3 ubiquitin-protein ligase TM129 (Tmem129) (Mus musculus (Mouse)).